Here is a 335-residue protein sequence, read N- to C-terminus: Acetyl-coenzyme A carboxylase carboxyl transferase subunit alpha (335 aa).

Positions 48-308 (VLESKVDALR…KSLLVEELRM (261 aa)) constitute a CoA carboxyltransferase C-terminal domain.

The protein belongs to the AccA family. In terms of assembly, acetyl-CoA carboxylase is a heterohexamer composed of biotin carboxyl carrier protein (AccB), biotin carboxylase (AccC) and two subunits each of ACCase subunit alpha (AccA) and ACCase subunit beta (AccD).

It is found in the cytoplasm. The catalysed reaction is N(6)-carboxybiotinyl-L-lysyl-[protein] + acetyl-CoA = N(6)-biotinyl-L-lysyl-[protein] + malonyl-CoA. The protein operates within lipid metabolism; malonyl-CoA biosynthesis; malonyl-CoA from acetyl-CoA: step 1/1. Its function is as follows. Component of the acetyl coenzyme A carboxylase (ACC) complex. First, biotin carboxylase catalyzes the carboxylation of biotin on its carrier protein (BCCP) and then the CO(2) group is transferred by the carboxyltransferase to acetyl-CoA to form malonyl-CoA. The chain is Acetyl-coenzyme A carboxylase carboxyl transferase subunit alpha from Chlorobium phaeobacteroides (strain BS1).